The chain runs to 262 residues: 14-3-3-like protein A (262 aa).

Residues D240–S262 form a disordered region. A compositionally biased stretch (basic and acidic residues) spans D247–S262.

It belongs to the 14-3-3 family.

The sequence is that of 14-3-3-like protein A from Hordeum vulgare (Barley).